A 232-amino-acid polypeptide reads, in one-letter code: Adenosylcobinamide-GDP ribazoletransferase (232 aa).

A run of 6 helical transmembrane segments spans residues 32 to 52 (PIYFPLVGYIPGILFFFGGSF), 54 to 74 (NFLLKILFLILGYYFFDLFHF), 102 to 122 (VGPFAVFFGTLYVVVFWTLYL), 126 to 146 (PITFIYSSVFGRYSMNLLMFF), 172 to 192 (FFLLPLLFSMKYFFISYVVTV), and 212 to 232 (DVLGGACLMTNGLLLVVLGVV).

The protein belongs to the CobS family. The cofactor is Mg(2+).

It is found in the cell inner membrane. The catalysed reaction is alpha-ribazole + adenosylcob(III)inamide-GDP = adenosylcob(III)alamin + GMP + H(+). It carries out the reaction alpha-ribazole 5'-phosphate + adenosylcob(III)inamide-GDP = adenosylcob(III)alamin 5'-phosphate + GMP + H(+). Its pathway is cofactor biosynthesis; adenosylcobalamin biosynthesis; adenosylcobalamin from cob(II)yrinate a,c-diamide: step 7/7. In terms of biological role, joins adenosylcobinamide-GDP and alpha-ribazole to generate adenosylcobalamin (Ado-cobalamin). Also synthesizes adenosylcobalamin 5'-phosphate from adenosylcobinamide-GDP and alpha-ribazole 5'-phosphate. In Thermosipho melanesiensis (strain DSM 12029 / CIP 104789 / BI429), this protein is Adenosylcobinamide-GDP ribazoletransferase.